Here is a 478-residue protein sequence, read N- to C-terminus: Cytochrome c-552 (478 aa).

Residues 1–26 form the signal peptide; that stretch reads MTRIKINARRIFSLLIPFFFFTSVHA. Histidine 94 provides a ligand contact to heme c. Heme contacts are provided by cysteine 122, cysteine 125, and lysine 126. Residues cysteine 160, cysteine 163, histidine 164, cysteine 209, cysteine 212, and histidine 213 each contribute to the heme c site. Ca(2+)-binding residues include glutamate 215, tyrosine 216, lysine 261, and glutamine 263. Tyrosine 216 lines the substrate pocket. Histidine 264 provides a ligand contact to substrate. Positions 275, 282, 285, 286, 301, 314, 317, 318, and 393 each coordinate heme c.

Belongs to the cytochrome c-552 family. Requires Ca(2+) as cofactor. It depends on heme c as a cofactor.

Its subcellular location is the periplasm. It catalyses the reaction 6 Fe(III)-[cytochrome c] + NH4(+) + 2 H2O = 6 Fe(II)-[cytochrome c] + nitrite + 8 H(+). It functions in the pathway nitrogen metabolism; nitrate reduction (assimilation). In terms of biological role, catalyzes the reduction of nitrite to ammonia, consuming six electrons in the process. This chain is Cytochrome c-552, found in Shigella flexneri.